An 84-amino-acid chain; its full sequence is Small ribosomal subunit protein eS27w (84 aa).

A C4-type zinc finger spans residues 39-61; the sequence is CQGCFNITTVFSHSQTVVVCGNC.

Belongs to the eukaryotic ribosomal protein eS27 family. Requires Zn(2+) as cofactor.

In Arabidopsis thaliana (Mouse-ear cress), this protein is Small ribosomal subunit protein eS27w (RPS27D).